Consider the following 365-residue polypeptide: Peptide chain release factor 2 (365 aa).

At glutamine 252 the chain carries N5-methylglutamine.

This sequence belongs to the prokaryotic/mitochondrial release factor family. In terms of processing, methylated by PrmC. Methylation increases the termination efficiency of RF2.

The protein localises to the cytoplasm. In terms of biological role, peptide chain release factor 2 directs the termination of translation in response to the peptide chain termination codons UGA and UAA. The polypeptide is Peptide chain release factor 2 (Colwellia psychrerythraea (strain 34H / ATCC BAA-681) (Vibrio psychroerythus)).